The primary structure comprises 454 residues: Toxin CfTX-A (454 aa).

The N-terminal stretch at 1-18 is a signal peptide; that stretch reads MDYAFIVFLVCFVSGTLG. A propeptide spanning residues 19 to 25 is cleaved from the precursor; that stretch reads NRRRAKR. Positions 27–61 form a coiled coil; the sequence is VDEVTSGINQLVNQLNNVQQDTAAIKSALEELKTE.

This sequence belongs to the jellyfish toxin family. Type II subfamily. Oligomer. Contains 2 disulfide bonds. In terms of tissue distribution, nematocytes.

The protein localises to the secreted. Its subcellular location is the nematocyst. The protein resides in the target cell membrane. Its function is as follows. The fraction containing this toxin and CfTX-A shows potent hemolytic activity. This fraction causes minor effects on the cardiovascular system of anesthetized rats (at 25 ug/kg), since it has no significant effects on heart rate but produces relatively small increases in mean arterial pressure. The protein is Toxin CfTX-A of Chironex fleckeri (Australian box jellyfish).